The primary structure comprises 493 residues: Glycerol kinase (493 aa).

Thr11 is an ADP binding site. 3 residues coordinate ATP: Thr11, Thr12, and Ser13. Thr11 is a sn-glycerol 3-phosphate binding site. An ADP-binding site is contributed by Arg15. 4 residues coordinate sn-glycerol 3-phosphate: Arg80, Glu81, Tyr132, and Asp241. Glycerol contacts are provided by Arg80, Glu81, Tyr132, Asp241, and Gln242. ADP is bound by residues Thr263 and Gly306. 4 residues coordinate ATP: Thr263, Gly306, Gln310, and Gly408. Residue Gly408 coordinates ADP.

Belongs to the FGGY kinase family.

The catalysed reaction is glycerol + ATP = sn-glycerol 3-phosphate + ADP + H(+). The protein operates within polyol metabolism; glycerol degradation via glycerol kinase pathway; sn-glycerol 3-phosphate from glycerol: step 1/1. With respect to regulation, inhibited by fructose 1,6-bisphosphate (FBP). Key enzyme in the regulation of glycerol uptake and metabolism. Catalyzes the phosphorylation of glycerol to yield sn-glycerol 3-phosphate. This Cereibacter sphaeroides (strain ATCC 17023 / DSM 158 / JCM 6121 / CCUG 31486 / LMG 2827 / NBRC 12203 / NCIMB 8253 / ATH 2.4.1.) (Rhodobacter sphaeroides) protein is Glycerol kinase.